A 310-amino-acid chain; its full sequence is ADP-L-glycero-D-manno-heptose-6-epimerase (310 aa).

Residues 10-11 (FI), 31-32 (DN), Lys38, Lys53, 75-79 (EGACS), and Asn92 each bind NADP(+). The Proton acceptor role is filled by Tyr140. Position 144 (Lys144) interacts with NADP(+). Asn169 serves as a coordination point for substrate. Residues Val170 and Lys178 each coordinate NADP(+). Lys178 functions as the Proton acceptor in the catalytic mechanism. Substrate contacts are provided by residues Ser180, His187, 201–204 (FEGS), Arg209, and Tyr272.

The protein belongs to the NAD(P)-dependent epimerase/dehydratase family. HldD subfamily. In terms of assembly, homopentamer. The cofactor is NADP(+).

It carries out the reaction ADP-D-glycero-beta-D-manno-heptose = ADP-L-glycero-beta-D-manno-heptose. Its pathway is nucleotide-sugar biosynthesis; ADP-L-glycero-beta-D-manno-heptose biosynthesis; ADP-L-glycero-beta-D-manno-heptose from D-glycero-beta-D-manno-heptose 7-phosphate: step 4/4. Its function is as follows. Catalyzes the interconversion between ADP-D-glycero-beta-D-manno-heptose and ADP-L-glycero-beta-D-manno-heptose via an epimerization at carbon 6 of the heptose. The polypeptide is ADP-L-glycero-D-manno-heptose-6-epimerase (Klebsiella pneumoniae (strain 342)).